Consider the following 239-residue polypeptide: 1-(5-phosphoribosyl)-5-[(5-phosphoribosylamino)methylideneamino] imidazole-4-carboxamide isomerase (239 aa).

D9 serves as the catalytic Proton acceptor. The active-site Proton donor is D131.

It belongs to the HisA/HisF family.

Its subcellular location is the cytoplasm. The enzyme catalyses 1-(5-phospho-beta-D-ribosyl)-5-[(5-phospho-beta-D-ribosylamino)methylideneamino]imidazole-4-carboxamide = 5-[(5-phospho-1-deoxy-D-ribulos-1-ylimino)methylamino]-1-(5-phospho-beta-D-ribosyl)imidazole-4-carboxamide. Its pathway is amino-acid biosynthesis; L-histidine biosynthesis; L-histidine from 5-phospho-alpha-D-ribose 1-diphosphate: step 4/9. The chain is 1-(5-phosphoribosyl)-5-[(5-phosphoribosylamino)methylideneamino] imidazole-4-carboxamide isomerase from Bacteroides fragilis (strain ATCC 25285 / DSM 2151 / CCUG 4856 / JCM 11019 / LMG 10263 / NCTC 9343 / Onslow / VPI 2553 / EN-2).